Reading from the N-terminus, the 311-residue chain is Homeobox-leucine zipper protein HOX1 (311 aa).

Disordered regions lie at residues 29–69 and 97–160; these read AGGA…SDHR and AETT…KKLR. The segment covering 119–145 has biased composition (low complexity); the sequence is SSPNSTLSSLSGKRGAPSAATAAAAAA. Residues 154–213 constitute a DNA-binding region (homeobox); that stretch reads GSRKKLRLSKDQAAVLEDTFKEHNTLNPKQKAALARQLNLKPRQVEVWFQNRRARTKLKQ. The segment at 212–256 is leucine-zipper; it reads KQTEVDCELLKRCCETLTDENRRLHRELQELRALKLATAAAAPHH. A disordered region spans residues 279–311; sequence SAATTTRNNSGAAPARPVPTRPWPPAAAQRSSA. A compositionally biased stretch (polar residues) spans 280–289; that stretch reads AATTTRNNSG. Over residues 294-303 the composition is skewed to pro residues; it reads RPVPTRPWPP.

Belongs to the HD-ZIP homeobox family. Class II subfamily. Homodimer. May form a heterodimer with HOX2, HOX3 or HOX7. As to expression, expressed in root provascular and vascular cylinder, provascular and vascular strands of leaves, provascular and vascular strands of the whole panicle, in mature embryo provascular bundles of scutellum and embryonic axis and provascular and vascular strands of young immature spikelet organs. Expressed in differentiating and differentiated xylem and phloem elements, and in outer and inner bundle sheath cells of all vascular bundles. Expressed in auricles, ligules, culm, guard cells brac hairs and pollen.

The protein resides in the nucleus. Functionally, probable transcription repressor involved leaf development. Binds to the DNA sequence 5'-CAAT[GC]ATTG-3'. May act as a regulatory switch to specify provascular cell fate. The polypeptide is Homeobox-leucine zipper protein HOX1 (HOX1) (Oryza sativa subsp. indica (Rice)).